A 608-amino-acid chain; its full sequence is Dihydroxy-acid dehydratase, chloroplastic (608 aa).

Residues 1-34 (MQATIFSPRATLFPCKPLLPSHNVNSRRPSIISC) constitute a chloroplast transit peptide. At Ser-35 the chain carries N-acetylserine. Residue Cys-100 participates in [2Fe-2S] cluster binding. Asp-132 contributes to the Mg(2+) binding site. Cys-173 serves as a coordination point for [2Fe-2S] cluster. Asp-174 provides a ligand contact to Mg(2+). Cys-245 serves as a coordination point for [2Fe-2S] cluster. Position 497 (Glu-497) interacts with Mg(2+). Ser-523 acts as the Proton acceptor in catalysis.

Belongs to the IlvD/Edd family. [2Fe-2S] cluster is required as a cofactor. Requires Mg(2+) as cofactor.

It localises to the plastid. The protein localises to the chloroplast. It carries out the reaction (2R)-2,3-dihydroxy-3-methylbutanoate = 3-methyl-2-oxobutanoate + H2O. The catalysed reaction is (2R,3R)-2,3-dihydroxy-3-methylpentanoate = (S)-3-methyl-2-oxopentanoate + H2O. The protein operates within amino-acid biosynthesis; L-isoleucine biosynthesis; L-isoleucine from 2-oxobutanoate: step 3/4. It participates in amino-acid biosynthesis; L-valine biosynthesis; L-valine from pyruvate: step 3/4. With respect to regulation, is highly competitively inhibited by the fungal sesquiterpenoid aspterric acid, which is effective as a herbicide in spray applications. Its function is as follows. Functions in the biosynthesis of branched-chain amino acids. Catalyzes the dehydration of (2R,3R)-2,3-dihydroxy-3-methylpentanoate (2,3-dihydroxy-3-methylvalerate) into 2-oxo-3-methylpentanoate (2-oxo-3-methylvalerate) and of (2R)-2,3-dihydroxy-3-methylbutanoate (2,3-dihydroxyisovalerate) into 2-oxo-3-methylbutanoate (2-oxoisovalerate), the penultimate precursor to L-isoleucine and L-valine, respectively. The polypeptide is Dihydroxy-acid dehydratase, chloroplastic (Arabidopsis thaliana (Mouse-ear cress)).